The following is a 426-amino-acid chain: Probable imidazolonepropionase (426 aa).

Residues Y158 and H192 each contribute to the 4-imidazolone-5-propanoate site. Position 158 (Y158) interacts with N-formimidoyl-L-glutamate. Residue H260 participates in Fe(3+) binding. H260 is a Zn(2+) binding site. E263 lines the 4-imidazolone-5-propanoate pocket. D334 contacts Fe(3+). D334 is a binding site for Zn(2+). N336 provides a ligand contact to N-formimidoyl-L-glutamate.

Belongs to the metallo-dependent hydrolases superfamily. HutI family. The cofactor is Zn(2+). Fe(3+) is required as a cofactor.

The catalysed reaction is 4-imidazolone-5-propanoate + H2O = N-formimidoyl-L-glutamate. It participates in amino-acid degradation; L-histidine degradation into L-glutamate; N-formimidoyl-L-glutamate from L-histidine: step 3/3. The protein is Probable imidazolonepropionase (amdhd1) of Dictyostelium discoideum (Social amoeba).